Reading from the N-terminus, the 305-residue chain is Protoheme IX farnesyltransferase (305 aa).

9 helical membrane passes run 31 to 51 (VMSLVIFTGFVGMWLAPYSVH), 52 to 72 (PFIAGIAVVCIALGAGSAGAI), 96 to 118 (VIESDEALSFGLITGFFAVFFMA), 123 to 145 (LLASFLLLFTIFYYICIYTIWLK), 151 to 171 (NIVIGGVSGALPPVIGYAAVS), 179 to 199 (IILFLIIFIWTPPHSWALALF), 225 to 245 (ILIYSILLFIVSLMPFFIGMN), 247 to 267 (FIYLIISGILGVVFLYYAGSL), and 281 to 301 (FAYSIFYLFFIFLLLYSTNTI).

The protein belongs to the UbiA prenyltransferase family. Protoheme IX farnesyltransferase subfamily.

The protein resides in the cell inner membrane. It catalyses the reaction heme b + (2E,6E)-farnesyl diphosphate + H2O = Fe(II)-heme o + diphosphate. The protein operates within porphyrin-containing compound metabolism; heme O biosynthesis; heme O from protoheme: step 1/1. In terms of biological role, converts heme B (protoheme IX) to heme O by substitution of the vinyl group on carbon 2 of heme B porphyrin ring with a hydroxyethyl farnesyl side group. In Rickettsia rickettsii (strain Iowa), this protein is Protoheme IX farnesyltransferase.